The sequence spans 73 residues: Large ribosomal subunit protein bL31 (73 aa).

Residues Cys-16, Cys-18, Cys-38, and Cys-41 each coordinate Zn(2+).

This sequence belongs to the bacterial ribosomal protein bL31 family. Type A subfamily. In terms of assembly, part of the 50S ribosomal subunit. Requires Zn(2+) as cofactor.

In terms of biological role, binds the 23S rRNA. The polypeptide is Large ribosomal subunit protein bL31 (Streptomyces avermitilis (strain ATCC 31267 / DSM 46492 / JCM 5070 / NBRC 14893 / NCIMB 12804 / NRRL 8165 / MA-4680)).